The chain runs to 355 residues: Zinc finger A20 and AN1 domain-containing stress-associated protein 3 (355 aa).

The A20-type zinc-finger motif lies at 199-233; sequence AGQPVLCASGCGFYGNPATLDMCSVCYRQHCLLNG. Zn(2+)-binding residues include C205, C209, C221, C224, C295, C298, C309, C311, C316, H319, H325, and C327. The segment at 289-335 adopts an AN1-type zinc-finger fold; sequence KAPANRCASCKKKVGLLGFACRCGATYCGTHRYPEKHACGFDFKGAS.

May be involved in environmental stress response. The polypeptide is Zinc finger A20 and AN1 domain-containing stress-associated protein 3 (SAP3) (Oryza sativa subsp. japonica (Rice)).